The following is a 289-amino-acid chain: ATP synthase gamma chain (289 aa).

Belongs to the ATPase gamma chain family. As to quaternary structure, F-type ATPases have 2 components, CF(1) - the catalytic core - and CF(0) - the membrane proton channel. CF(1) has five subunits: alpha(3), beta(3), gamma(1), delta(1), epsilon(1). CF(0) has three main subunits: a, b and c.

It is found in the cell inner membrane. In terms of biological role, produces ATP from ADP in the presence of a proton gradient across the membrane. The gamma chain is believed to be important in regulating ATPase activity and the flow of protons through the CF(0) complex. The protein is ATP synthase gamma chain of Haemophilus influenzae (strain 86-028NP).